The following is a 460-amino-acid chain: Ankyrin repeat and MYND domain-containing protein 2 (460 aa).

ANK repeat units lie at residues 45–74 (HGMT…DVNC), 79–108 (HGYT…ETDV), and 159–188 (KLAG…NPLL). The Zn(2+) site is built by Cys-320, Cys-323, Cys-332, Cys-335, Cys-341, Cys-345, His-353, and Cys-357. The segment at 320-357 (CTTCGEKGADKRCSVCKVVMYCDQNCQKTHWFTHKKVC) adopts an MYND-type zinc-finger fold. 2 stretches are compositionally biased toward basic and acidic residues: residues 371–387 (AAKE…KDEA) and 425–436 (ELTKEPEARAPR). The tract at residues 371–460 (AAKEKRRQEK…ALQKIQDSEE (90 aa)) is disordered.

It localises to the cell projection. The protein resides in the cilium. Its function is as follows. May be involved in the trafficking of signaling proteins to the cilia. This Gallus gallus (Chicken) protein is Ankyrin repeat and MYND domain-containing protein 2 (ANKMY2).